A 425-amino-acid chain; its full sequence is Histidine--tRNA ligase (425 aa).

It belongs to the class-II aminoacyl-tRNA synthetase family. Homodimer.

It is found in the cytoplasm. It carries out the reaction tRNA(His) + L-histidine + ATP = L-histidyl-tRNA(His) + AMP + diphosphate + H(+). The polypeptide is Histidine--tRNA ligase (Buchnera aphidicola subsp. Baizongia pistaciae (strain Bp)).